We begin with the raw amino-acid sequence, 186 residues long: uncharacterized protein (186 aa).

This is an uncharacterized protein from Saccharomyces cerevisiae (strain ATCC 204508 / S288c) (Baker's yeast).